The sequence spans 705 residues: Prolyl endopeptidase (705 aa).

A signal peptide spans 1–20 (MKYKKLSVAVAAFAFAAVSA). Active-site charge relay system residues include S556 and H675.

Belongs to the peptidase S9A family. Monomer.

It localises to the periplasm. The enzyme catalyses Hydrolysis of Pro-|-Xaa &gt;&gt; Ala-|-Xaa in oligopeptides.. Functionally, cleaves peptide bonds on the C-terminal side of prolyl residues within peptides that are up to approximately 30 amino acids long. Has an absolute requirement for an X-Pro bond in the trans configuration immediately preceding the Pro-Y scissible bond. This is Prolyl endopeptidase from Elizabethkingia miricola (Chryseobacterium miricola).